The sequence spans 426 residues: Serine hydroxymethyltransferase (426 aa).

(6S)-5,6,7,8-tetrahydrofolate-binding positions include L113 and 117–119 (GHL). K222 carries the post-translational modification N6-(pyridoxal phosphate)lysine. Residue 363–365 (SAF) coordinates (6S)-5,6,7,8-tetrahydrofolate.

The protein belongs to the SHMT family. Homodimer. Pyridoxal 5'-phosphate serves as cofactor.

It localises to the cytoplasm. It catalyses the reaction (6R)-5,10-methylene-5,6,7,8-tetrahydrofolate + glycine + H2O = (6S)-5,6,7,8-tetrahydrofolate + L-serine. It participates in one-carbon metabolism; tetrahydrofolate interconversion. The protein operates within amino-acid biosynthesis; glycine biosynthesis; glycine from L-serine: step 1/1. Its function is as follows. Catalyzes the reversible interconversion of serine and glycine with tetrahydrofolate (THF) serving as the one-carbon carrier. This reaction serves as the major source of one-carbon groups required for the biosynthesis of purines, thymidylate, methionine, and other important biomolecules. Also exhibits THF-independent aldolase activity toward beta-hydroxyamino acids, producing glycine and aldehydes, via a retro-aldol mechanism. This chain is Serine hydroxymethyltransferase, found in Bacteroides fragilis (strain ATCC 25285 / DSM 2151 / CCUG 4856 / JCM 11019 / LMG 10263 / NCTC 9343 / Onslow / VPI 2553 / EN-2).